A 338-amino-acid polypeptide reads, in one-letter code: Phosphatidylinositol:ceramide inositolphosphotransferase (338 aa).

At methionine 1–arginine 36 the chain is on the cytoplasmic side. A helical transmembrane segment spans residues phenylalanine 37 to alanine 57. The Extracellular segment spans residues arginine 58–asparagine 87. Residues valine 88–glutamate 108 traverse the membrane as a helical segment. Residues arginine 109–arginine 116 are Cytoplasmic-facing. Residues valine 117–valine 137 form a helical membrane-spanning segment. The Extracellular portion of the chain corresponds to leucine 138–proline 152. A helical membrane pass occupies residues isoleucine 153 to isoleucine 173. The Cytoplasmic segment spans residues methionine 174–glutamine 189. A helical transmembrane segment spans residues valine 190 to isoleucine 210. The Extracellular segment spans residues histidine 211–methionine 222. Histidine 220 is an active-site residue. Residues isoleucine 223 to valine 243 traverse the membrane as a helical segment. Residues arginine 244–histidine 338 are Cytoplasmic-facing. Catalysis depends on residues histidine 264 and aspartate 268.

The protein belongs to the sphingomyelin synthase family.

It is found in the membrane. In terms of biological role, bidirectional lipid inositolphosphotransferase capable of converting phosphatidylinositol (PI) and ceramide to inositol-phosphorylceramide (IPC) and diacylglycerol (DAG) and vice versa. Direction is dependent on the relative concentrations of DAG and ceramide as phosphoinositol acceptors. Essential for viability of the pathogenic bloodstream stage of this human protozoan parasite and, consequently, can be considered as potential drug target. The chain is Phosphatidylinositol:ceramide inositolphosphotransferase from Leishmania major.